The chain runs to 140 residues: Large ribosomal subunit protein uL16 (140 aa).

The protein belongs to the universal ribosomal protein uL16 family. In terms of assembly, part of the 50S ribosomal subunit.

In terms of biological role, binds 23S rRNA and is also seen to make contacts with the A and possibly P site tRNAs. This is Large ribosomal subunit protein uL16 from Citrifermentans bemidjiense (strain ATCC BAA-1014 / DSM 16622 / JCM 12645 / Bem) (Geobacter bemidjiensis).